We begin with the raw amino-acid sequence, 496 residues long: PE-PGRS family protein PE_PGRS1 (496 aa).

The 91-residue stretch at 4-94 folds into the PE domain; that stretch reads LITSPATVAA…VCYAAAETAN (91 aa). Positions 461–480 are disordered; sequence LIGNGGDGGPGMFGGPGGAG.

It belongs to the mycobacterial PE family. PGRS subfamily.

The protein localises to the secreted. It is found in the cell wall. It localises to the host mitochondrion. Its function is as follows. When expressed in host mitochondria, induces mitochondrial stress which results in mitochondrial membrane depolarization, up-regulation of mitochondrial superoxides and release of cytochrome-C in the cytoplasm. The cytochrome-C in cytoplasm triggers the activation of caspase-9, caspase-3 and caspase-7, leading to the apoptosis of host macrophages. Being a late expressing protein, apoptosis induction by PE_PGRS1 may facilitate the M.tuberculosis survival and silent expansion of its niche at the site of granuloma. Functionally, when expressed in THP-1 macrophages, promotes the survival of mycobacteria within macrophages after a 24- to 48-hour infection by blocking endoplasmic reticulum stress and inhibiting host cell apoptosis. Can chelate excessive intracellular calcium in THP-1 macrophages, which reduces the concentration of intracellular free Ca(2+) and blocks the PERK-eIF2alpha-ATF4 axis, thereby inhibiting the endoplasmic reticulum stress caused by infection. It also reduces the apoptosis of THP-1 macrophages by decreasing the activation of caspase-3 and caspase-9. This chain is PE-PGRS family protein PE_PGRS1, found in Mycobacterium tuberculosis (strain ATCC 25618 / H37Rv).